We begin with the raw amino-acid sequence, 123 residues long: Glutaredoxin-like protein (123 aa).

Positions 27–123 (INEVEESITN…GTLFNDLKKK (97 aa)) constitute a Glutaredoxin domain.

This sequence belongs to the glutaredoxin family.

The polypeptide is Glutaredoxin-like protein (grxB) (Dictyostelium discoideum (Social amoeba)).